Consider the following 550-residue polypeptide: Chaperonin GroEL 1 (550 aa).

Residues 29–32, 86–90, glycine 413, 477–479, and aspartate 493 contribute to the ATP site; these read TIGP, DGTTT, and NAA. The disordered stretch occupies residues 524 to 550; sequence AVSDGDHGHSHGHGHSHGHSHPQGPGF. Positions 533 to 543 are enriched in basic residues; the sequence is SHGHGHSHGHS.

It belongs to the chaperonin (HSP60) family. In terms of assembly, forms a cylinder of 14 subunits composed of two heptameric rings stacked back-to-back. Interacts with the co-chaperonin GroES.

The protein resides in the cytoplasm. The catalysed reaction is ATP + H2O + a folded polypeptide = ADP + phosphate + an unfolded polypeptide.. In terms of biological role, together with its co-chaperonin GroES, plays an essential role in assisting protein folding. The GroEL-GroES system forms a nano-cage that allows encapsulation of the non-native substrate proteins and provides a physical environment optimized to promote and accelerate protein folding. This Frankia alni (strain DSM 45986 / CECT 9034 / ACN14a) protein is Chaperonin GroEL 1.